A 530-amino-acid polypeptide reads, in one-letter code: Ubiquitin carboxyl-terminal hydrolase 17-like protein 10 (530 aa).

The 296-residue stretch at 80 to 375 folds into the USP domain; the sequence is AGLQNMGNTC…QAYVLFYIQK (296 aa). The active-site Nucleophile is cysteine 89. Histidine 334 acts as the Proton acceptor in catalysis. 2 stretches are compositionally biased toward basic and acidic residues: residues 382–392 and 398–410; these read SESVSRGREPR and DTDRRATQGELKR. Disordered stretches follow at residues 382–410 and 477–530; these read SESVSRGREPRALGVEDTDRRATQGELKR and NHHP…LVCQ. The segment covering 484 to 495 has biased composition (low complexity); the sequence is SSLLNLSSTTPT. Residues 496–505 are compositionally biased toward polar residues; sequence DQESMNTGTL. Over residues 510–524 the composition is skewed to basic residues; sequence GRTRRSKGKNKHSKR.

The protein belongs to the peptidase C19 family. USP17 subfamily.

Its subcellular location is the nucleus. It is found in the endoplasmic reticulum. The catalysed reaction is Thiol-dependent hydrolysis of ester, thioester, amide, peptide and isopeptide bonds formed by the C-terminal Gly of ubiquitin (a 76-residue protein attached to proteins as an intracellular targeting signal).. Its function is as follows. Deubiquitinating enzyme that removes conjugated ubiquitin from specific proteins to regulate different cellular processes that may include cell proliferation, progression through the cell cycle, apoptosis, cell migration, and the cellular response to viral infection. In Homo sapiens (Human), this protein is Ubiquitin carboxyl-terminal hydrolase 17-like protein 10 (USP17L10).